We begin with the raw amino-acid sequence, 304 residues long: uncharacterized protein (304 aa).

Residues 136 to 137 (GI), 215 to 217 (VGR), and D241 contribute to the NAD(+) site. R217 is a catalytic residue. Residue E246 is part of the active site. The Proton donor role is filled by H265. 265 to 268 (HTAN) serves as a coordination point for NAD(+).

Belongs to the D-isomer specific 2-hydroxyacid dehydrogenase family.

This is an uncharacterized protein from Corynebacterium melassecola.